The following is a 118-amino-acid chain: Protein 5.3 (118 aa).

The chain is Protein 5.3 from Escherichia phage T7 (Bacteriophage T7).